Consider the following 138-residue polypeptide: Basic phospholipase A2 Bs-N6 (138 aa).

A signal peptide spans 1 to 16 (MRTLWIVAVLLVGVEG). 7 disulfides stabilise this stretch: Cys42/Cys131, Cys44/Cys60, Cys59/Cys111, Cys65/Cys138, Cys66/Cys104, Cys73/Cys97, and Cys91/Cys102. Residues Tyr43, Gly45, and Gly47 each coordinate Ca(2+). The active site involves His63. Asp64 provides a ligand contact to Ca(2+). Asp105 is an active-site residue.

Monomer. Ca(2+) serves as cofactor. In terms of processing, contains 7 disulfide bonds. In terms of tissue distribution, expressed by the venom gland.

It is found in the secreted. It carries out the reaction a 1,2-diacyl-sn-glycero-3-phosphocholine + H2O = a 1-acyl-sn-glycero-3-phosphocholine + a fatty acid + H(+). Snake venom phospholipase A2 (PLA2) that shows myotoxic activities. PLA2 catalyzes the calcium-dependent hydrolysis of the 2-acyl groups in 3-sn-phosphoglycerides. The protein is Basic phospholipase A2 Bs-N6 of Bothriechis schlegelii (Eyelash palm pitviper).